The following is a 446-amino-acid chain: D(1A) dopamine receptor (446 aa).

Residues 1-22 (MAPNTSTMDETGLPVERDFSFR) are Extracellular-facing. N-linked (GlcNAc...) asparagine glycosylation is present at Asn-4. A helical transmembrane segment spans residues 23-48 (ILTACFLSLLILSTLLGNTLVCAAVI). Over 49-59 (RFRHLRSKVTN) the chain is Cytoplasmic. A helical transmembrane segment spans residues 60 to 86 (FFVISLAVSDLLVAVLVMPWKAVAEIA). The Extracellular segment spans residues 87–95 (GFWPFGSFC). A disulfide bridge connects residues Cys-95 and Cys-186. A helical transmembrane segment spans residues 96 to 118 (NIWVAFDIMCSTASILNLCVISV). Residues 119 to 137 (DRYWAISSPFQYERKMTPK) are Cytoplasmic-facing. The chain crosses the membrane as a helical span at residues 138–162 (AAFILISVAWTLSVLISFIPVQLSW). The Extracellular portion of the chain corresponds to 163-192 (HKAKPTWPLDGNFTSLEDAEDDNCDTRLSR). The helical transmembrane segment at 193 to 218 (TYAISSSLISFYIPVAIMIVTYTSIY) threads the bilayer. Residues 219–272 (RIAQKQIRRISALERAAVHAKNCQTTTGNGNPVECSQSESSFKMSFKRETKVLK) lie on the Cytoplasmic side of the membrane. The helical transmembrane segment at 273-299 (TLSVIMGVFVCCWLPFFISNCMVPFCG) threads the bilayer. Over 300 to 312 (SEETQPFCIDSIT) the chain is Extracellular. A helical membrane pass occupies residues 313–337 (FDVFVWFGWANSSLNPIIYAFNADF). Over 338-446 (QKAFSTLLGC…PVTHSGQHST (109 aa)) the chain is Cytoplasmic. 2 S-palmitoyl cysteine lipidation sites follow: Cys-347 and Cys-351. Ser-441 bears the Phosphoserine mark.

This sequence belongs to the G-protein coupled receptor 1 family. As to quaternary structure, interacts with DNAJC14 via its C-terminus. Interacts with DRD2. Interacts with DORIP1.

The protein resides in the cell membrane. Its subcellular location is the endoplasmic reticulum membrane. It localises to the cell projection. The protein localises to the cilium membrane. It is found in the dendrite. The protein resides in the dendritic spine. Functionally, dopamine receptor whose activity is mediated by G proteins which activate adenylyl cyclase. The protein is D(1A) dopamine receptor (Drd1) of Mus musculus (Mouse).